The following is a 330-amino-acid chain: Mycothiol acetyltransferase (330 aa).

N-acetyltransferase domains lie at 5–142 and 171–328; these read LVTD…MPLR and VRLR…APRP. E36 contributes to the 1D-myo-inositol 2-(L-cysteinylamino)-2-deoxy-alpha-D-glucopyranoside binding site. Position 80-82 (80-82) interacts with acetyl-CoA; that stretch reads VVV. The interval 142 to 161 is disordered; the sequence is RDIAGDEPGGPWEAPELPEP. 1D-myo-inositol 2-(L-cysteinylamino)-2-deoxy-alpha-D-glucopyranoside contacts are provided by E198, K238, and E254. Residues 258 to 260 and 265 to 271 contribute to the acetyl-CoA site; these read VGV and QGSGLGR. Y292 lines the 1D-myo-inositol 2-(L-cysteinylamino)-2-deoxy-alpha-D-glucopyranoside pocket. Residue 297-302 coordinates acetyl-CoA; it reads NEAAVR.

Belongs to the acetyltransferase family. MshD subfamily. In terms of assembly, monomer.

The enzyme catalyses 1D-myo-inositol 2-(L-cysteinylamino)-2-deoxy-alpha-D-glucopyranoside + acetyl-CoA = mycothiol + CoA + H(+). Catalyzes the transfer of acetyl from acetyl-CoA to desacetylmycothiol (Cys-GlcN-Ins) to form mycothiol. The chain is Mycothiol acetyltransferase from Nocardiopsis dassonvillei (strain ATCC 23218 / DSM 43111 / CIP 107115 / JCM 7437 / KCTC 9190 / NBRC 14626 / NCTC 10488 / NRRL B-5397 / IMRU 509) (Actinomadura dassonvillei).